Here is a 160-residue protein sequence, read N- to C-terminus: Putative antiporter subunit mnhE2 (160 aa).

The next 3 membrane-spanning stretches (helical) occupy residues 22 to 42 (HFKF…IYIL), 55 to 75 (IWVA…SSIS), and 100 to 120 (SDWS…STVI).

The protein belongs to the CPA3 antiporters (TC 2.A.63) subunit E family. May form a heterooligomeric complex that consists of seven subunits: mnhA2, mnhB2, mnhC2, mnhD2, mnhE2, mnhF2 and mnhG2.

It localises to the cell membrane. The sequence is that of Putative antiporter subunit mnhE2 (mnhE2) from Staphylococcus aureus (strain USA300).